Here is a 105-residue protein sequence, read N- to C-terminus: Co-chaperonin GroES (105 aa).

This sequence belongs to the GroES chaperonin family. In terms of assembly, heptamer of 7 subunits arranged in a ring. Interacts with the chaperonin GroEL.

Its subcellular location is the cytoplasm. Its function is as follows. Together with the chaperonin GroEL, plays an essential role in assisting protein folding. The GroEL-GroES system forms a nano-cage that allows encapsulation of the non-native substrate proteins and provides a physical environment optimized to promote and accelerate protein folding. GroES binds to the apical surface of the GroEL ring, thereby capping the opening of the GroEL channel. This chain is Co-chaperonin GroES, found in Methylovorus sp. (strain SS1 / DSM 11726).